Consider the following 121-residue polypeptide: Protein FAM241B (121 aa).

The interval 12–58 is disordered; it reads QDDDPRVRTTTQPPRGSIPRQSFFNRGHGAPPGGPGPRQQQAGARLG. Residues 19-35 are compositionally biased toward polar residues; sequence RTTTQPPRGSIPRQSFF. Ser33 carries the post-translational modification Phosphoserine. Residues 48-58 are compositionally biased toward low complexity; that stretch reads PRQQQAGARLG. Ser62 carries the phosphoserine modification. Residues 92–112 form a helical membrane-spanning segment; the sequence is ILLLFLLMMLGVRGLLLVGLV.

It belongs to the FAM241 family.

Its subcellular location is the membrane. In terms of biological role, may play a role in lysosome homeostasis. The polypeptide is Protein FAM241B (Homo sapiens (Human)).